Reading from the N-terminus, the 379-residue chain is Chaperone protein DnaJ (379 aa).

A J domain is found at 5-69 (EFYDRLGVSK…QKRAAYDQYG (65 aa)). The segment at 135–217 (GAEKEVSYNR…CHGTGHEKKT (83 aa)) adopts a CR-type zinc-finger fold. Zn(2+)-binding residues include Cys148, Cys151, Cys165, Cys168, Cys191, Cys194, Cys205, and Cys208. 4 CXXCXGXG motif repeats span residues 148–155 (CHTCSGSG), 165–172 (CQKCHGSG), 191–198 (CDVCQGSG), and 205–212 (CPTCHGTG).

Belongs to the DnaJ family. Homodimer. The cofactor is Zn(2+).

The protein resides in the cytoplasm. Functionally, participates actively in the response to hyperosmotic and heat shock by preventing the aggregation of stress-denatured proteins and by disaggregating proteins, also in an autonomous, DnaK-independent fashion. Unfolded proteins bind initially to DnaJ; upon interaction with the DnaJ-bound protein, DnaK hydrolyzes its bound ATP, resulting in the formation of a stable complex. GrpE releases ADP from DnaK; ATP binding to DnaK triggers the release of the substrate protein, thus completing the reaction cycle. Several rounds of ATP-dependent interactions between DnaJ, DnaK and GrpE are required for fully efficient folding. Also involved, together with DnaK and GrpE, in the DNA replication of plasmids through activation of initiation proteins. The sequence is that of Chaperone protein DnaJ from Streptococcus agalactiae serotype V (strain ATCC BAA-611 / 2603 V/R).